A 565-amino-acid polypeptide reads, in one-letter code: Perivitellin-2 67 kDa subunit (565 aa).

An N-terminal signal peptide occupies residues Met-1–Gly-26. Residues Ala-27–Thr-340 form the MACPF domain. The interval Val-387–Lys-565 is invertebrate MACPF Accessory Domain (IMAD).

In terms of assembly, perivitellin-2 is a dimer of heterodimers held together head-to-tail by non-covalent forces. The heterodimer is composed of the tachylectin subunit (31 kDa) and the MACPF subunit (67 kDa) that are disulfide-linked. Post-translationally, PV2 is a very high density lipoprotein (VHDL). It contains 3.75% of lipids. The major lipid classes are free sterols and phospholipids and also have significant quantities of energy-providing triacylglycerides and free fatty acids. As to expression, produced by albumen secretory cells. Found in developing eggs.

The protein resides in the secreted. Its subcellular location is the target cell membrane. In terms of biological role, the egg defensive protein perivitellin-2 is a pore-forming two-subunit glycoprotein that affects both the nervous and digestive systems of mammals. In addition, it is a source of both structural and energetic molecules during embryonic development. The tachylectin subunit (31 kDa) binds target membranes while the MACPF subunit (67 kDa) disrupts lipid bilayers forming large pores (inner diameter of about 5.6 nm) altering the plasma membrance conductance. Both in vivo and in vitro, the protein shows wide pH range stability and is resistant to enzymatic proteolysis from gastrointestinal environments. It is cytotoxic to both epithelial and immune cells from the digestive system of mammals. It induces enterocyte death by a lytic mechanism and disrupts enterocyte monolayers in a dose-dependent manner. After oral administration to mice, it binds enterocytes and induces large dose-dependent morphological changes on their small intestine mucosa, reducing the absorptive surface. Additionally, it is detected in the Peyer's patches where it activates lymphoid follicles and triggers apoptosis. The toxin can also traverse the intestinal barrier and induce oral adaptive immunity with evidence of circulating antibody response. The toxin also shows hemagglutination properties thanks to the tachylectin subunit, but has no hemolytic activity. In addition to enterotoxin activity, the toxin also acts as a neurotoxin, since an intraperitoneal injection can induce paralysis of the mice rear limbs, followed by death. In Pomacea maculata (Giant applesnail), this protein is Perivitellin-2 67 kDa subunit.